Here is a 34-residue protein sequence, read N- to C-terminus: Colipase (34 aa).

2 disulfide bridges follow: Cys-12/Cys-23 and Cys-18/Cys-34.

It belongs to the colipase family. Forms a 1:1 stoichiometric complex with pancreatic lipase. As to expression, expressed by the pancreas.

The protein localises to the secreted. In terms of biological role, colipase is a cofactor of pancreatic lipase. It allows the lipase to anchor itself to the lipid-water interface. Without colipase the enzyme is washed off by bile salts, which have an inhibitory effect on the lipase. This Gallus gallus (Chicken) protein is Colipase (CLPS).